The chain runs to 245 residues: 1-(5-phosphoribosyl)-5-[(5-phosphoribosylamino)methylideneamino] imidazole-4-carboxamide isomerase (245 aa).

The Proton acceptor role is filled by Asp7. Asp129 functions as the Proton donor in the catalytic mechanism.

This sequence belongs to the HisA/HisF family.

It is found in the cytoplasm. The catalysed reaction is 1-(5-phospho-beta-D-ribosyl)-5-[(5-phospho-beta-D-ribosylamino)methylideneamino]imidazole-4-carboxamide = 5-[(5-phospho-1-deoxy-D-ribulos-1-ylimino)methylamino]-1-(5-phospho-beta-D-ribosyl)imidazole-4-carboxamide. It participates in amino-acid biosynthesis; L-histidine biosynthesis; L-histidine from 5-phospho-alpha-D-ribose 1-diphosphate: step 4/9. The polypeptide is 1-(5-phosphoribosyl)-5-[(5-phosphoribosylamino)methylideneamino] imidazole-4-carboxamide isomerase (Cronobacter sakazakii (strain ATCC BAA-894) (Enterobacter sakazakii)).